Here is a 61-residue protein sequence, read N- to C-terminus: Photosystem II reaction center protein K (61 aa).

Positions 1-24 are excised as a propeptide; it reads MPNILSLTCICFNSVLYPTSFFFA. A helical transmembrane segment spans residues 32–52; that stretch reads IFNPIVDIMPVIPLFFFLLAF.

It belongs to the PsbK family. In terms of assembly, PSII is composed of 1 copy each of membrane proteins PsbA, PsbB, PsbC, PsbD, PsbE, PsbF, PsbH, PsbI, PsbJ, PsbK, PsbL, PsbM, PsbT, PsbX, PsbY, PsbZ, Psb30/Ycf12, at least 3 peripheral proteins of the oxygen-evolving complex and a large number of cofactors. It forms dimeric complexes. Detected in both etioplasts and green leaves; PSII is only assembled in green leaves.

It localises to the plastid. Its subcellular location is the chloroplast thylakoid membrane. One of the components of the core complex of photosystem II (PSII). PSII is a light-driven water:plastoquinone oxidoreductase that uses light energy to abstract electrons from H(2)O, generating O(2) and a proton gradient subsequently used for ATP formation. It consists of a core antenna complex that captures photons, and an electron transfer chain that converts photonic excitation into a charge separation. This chain is Photosystem II reaction center protein K, found in Hordeum vulgare (Barley).